Here is an 80-residue protein sequence, read N- to C-terminus: Toxin Acra I-2 (80 aa).

The signal sequence occupies residues 1 to 22; it reads MMKLALFSIIVILFSLIGSIHG. The region spanning 25-80 is the LCN-type CS-alpha/beta domain; the sequence is VPGNYPLDSSGNKYPCTVLGDNQSCIDVCKKHGVKYGYCYSFKCWCEFLEDKNVSI. 3 disulfides stabilise this stretch: C40/C63, C49/C68, and C53/C70.

Expressed by the venom gland.

The protein localises to the secreted. Its function is as follows. Probable neurotoxin that inhibits ion channels. Is toxic to mice. Is about 2.8% of the total protein in the venom. This chain is Toxin Acra I-2, found in Androctonus crassicauda (Arabian fat-tailed scorpion).